The chain runs to 385 residues: Pectate lyase E (385 aa).

A signal peptide spans 1-30 (MKNTRVRSIGTKSLLAAVVTAALMATSAYA). Residue Asp-164 participates in Ca(2+) binding. The stretch at 177-182 (DHVTIS) is repeat 1. The interval 177–218 (DHVTISDGSFTDDKYTTKDGEKYVQHDGALDIKKGSDYVTIS) is 2 X 6 AA approximate repeats. Residue Asp-207 participates in Ca(2+) binding. Residues 213 to 218 (DYVTIS) form repeat 2. Residue Arg-260 is part of the active site.

Belongs to the polysaccharide lyase 1 family. PLBC subfamily. It depends on Ca(2+) as a cofactor.

The protein localises to the secreted. The catalysed reaction is Eliminative cleavage of (1-&gt;4)-alpha-D-galacturonan to give oligosaccharides with 4-deoxy-alpha-D-galact-4-enuronosyl groups at their non-reducing ends.. It functions in the pathway glycan metabolism; pectin degradation; 2-dehydro-3-deoxy-D-gluconate from pectin: step 2/5. Functionally, involved in maceration and soft-rotting of plant tissue. The polypeptide is Pectate lyase E (pelE) (Dickeya chrysanthemi (Pectobacterium chrysanthemi)).